We begin with the raw amino-acid sequence, 482 residues long: MVMQFQELENPVQISPCHSHTSSGFDMEVMSMKPAKGVLTEQVAGPLGQNLEVEPYSQYNNVQFPQVQPQISSSSYYSNVGFYPQQPEEWYSPGIYELRRMPAETLYQGETEVVEIPITKKARLGASAGRIKGDELCVVCGDRASGYHYNALTCEGCKGFFRRSITKNAVYKCKNGGNCVMDMYMRRKCQECRLRKCKEMGMLAECLLTEIQCKSKRLRKNVKQHADQAIHEDSEGRDLRQVTSTTKSCREKTELTPDQQNLLHYIMDSYSKQRMPQEITNKFLKEEFSAEENFIILTEMATSHVQVLVEFTKKLPGFQTLDHEDQIALLKGSAVEAMFLRSAEIFSKKLPAGHTDLLEERIRKSGISDEYITPMFSFYKSVAELKMTQEEYALLTAIVILSPDRQYIKDREAVEKLQEPLLDVLQKLCKIHQPENPQHFACLLGRLTELRTFNHHHADMLMSWRVNDHKFTPLLCEIWDVQ.

Lys-132 is covalently cross-linked (Glycyl lysine isopeptide (Lys-Gly) (interchain with G-Cter in SUMO1)). Positions 134-209 form a DNA-binding region, nuclear receptor; it reads DELCVVCGDR…MGMLAECLLT (76 aa). The segment at 137–157 adopts an NR C4-type zinc-finger fold; the sequence is CVVCGDRASGYHYNALTCEGC. Ser-145 and Ser-164 each carry phosphoserine; by PKC/PRKCA. Lys-167 is modified (N6-acetyllysine; by EP300). Residues 173–197 form an NR C4-type zinc finger; it reads CKNGGNCVMDMYMRRKCQECRLRKC. Lys-216 is modified (N6-methyllysine; by SETD7). Position 223 is an N6-acetyllysine; by EP300 (Lys-223). Positions 229 to 240 are enriched in basic and acidic residues; the sequence is AIHEDSEGRDLR. The segment at 229 to 253 is disordered; it reads AIHEDSEGRDLRQVTSTTKSCREKT. Residues 258–482 form the NR LBD domain; the sequence is DQQNLLHYIM…PLLCEIWDVQ (225 aa). A Glycyl lysine isopeptide (Lys-Gly) (interchain with G-Cter in SUMO1) cross-link involves residue Lys-285. Chenodeoxycholate is bound by residues Arg-341, Tyr-371, and Tyr-379. Position 452 is a phosphothreonine; by PKC/PRKCZ (Thr-452). His-457 serves as a coordination point for chenodeoxycholate.

Belongs to the nuclear hormone receptor family. NR1 subfamily. Heterodimer with RXRA; the heterodimerization enhances the binding affinity for LXXLL motifs from coactivators. Binds DNA predominantly as a heterodimer with RXRA. After activation by agonist binding interacts with coactivators. Interacts with NCOA1, NCOA2, PPARGC1A, CARM1, SETD7, PRMT1, GPS2, SMARCA4 and MED1, EP300 and SMARCD1. Interacts with XRCC5 and XRCC6; decreasing NR1H4/FXR transactivation activity towards ABCB11/BSEP. Interacts with PAGR1 AND NCOA6; indicative for an association with an MLL2/MLL3 complex (ASCOM). In terms of processing, acetylated by EP300. Lys-223 as is the major acetylation site for EP300; the dynamicly regulated acetylation inhibits heterodimerization with RXRA and transactivation activity. Deacetylated by SIRT1. Methylation may increase transactivation of target genes. Post-translationally, phosphorylation by PKC/PRKCA increases transactivation activity by promoting association with PPARGC1A. In terms of processing, sumoylated upon ligand binding.

The protein localises to the nucleus. Ligand-activated transcription factor. Receptor for bile acids (BAs) such as chenodeoxycholic acid (CDCA), lithocholic acid, deoxycholic acid (DCA) and allocholic acid (ACA). Plays a essential role in BA homeostasis through the regulation of genes involved in BA synthesis, conjugation and enterohepatic circulation. Also regulates lipid and glucose homeostasis and is involved innate immune response. The FXR-RXR heterodimer binds predominantly to farnesoid X receptor response elements (FXREs) containing two inverted repeats of the consensus sequence 5'-AGGTCA-3' in which the monomers are spaced by 1 nucleotide (IR-1) but also to tandem repeat DR1 sites with lower affinity, and can be activated by either FXR or RXR-specific ligands. It is proposed that monomeric nuclear receptors such as NR5A2/LRH-1 bound to coregulatory nuclear responsive element (NRE) halfsites located in close proximity to FXREs modulate transcriptional activity. In the liver activates transcription of the corepressor NR0B2 thereby indirectly inhibiting CYP7A1 and CYP8B1 (involved in BA synthesis) implicating at least in part histone demethylase KDM1A resulting in epigenomic repression, and SLC10A1/NTCP (involved in hepatic uptake of conjugated BAs). Activates transcription of the repressor MAFG (involved in regulation of BA synthesis). Activates transcription of SLC27A5/BACS and BAAT (involved in BA conjugation), ABCB11/BSEP (involved in bile salt export) by directly recruiting histone methyltransferase CARM1, and ABCC2/MRP2 (involved in secretion of conjugated BAs) and ABCB4 (involved in secretion of phosphatidylcholine in the small intestine). Activates transcription of SLC27A5/BACS and BAAT (involved in BA conjugation), ABCB11/BSEP (involved in bile salt export) by directly recruiting histone methyltransferase CARM1, and ABCC2/MRP2 (involved in secretion of conjugated BAs) and ABCB4 (involved in secretion of phosphatidylcholine in the small intestine). In the intestine activates FGF19 expression and secretion leading to hepatic CYP7A1 repression. The function also involves the coordinated induction of hepatic KLB/beta-klotho expression. Regulates transcription of liver UGT2B4 and SULT2A1 involved in BA detoxification; binding to the UGT2B4 promoter seems to imply a monomeric transactivation independent of RXRA. Modulates lipid homeostasis by activating liver NR0B2/SHP-mediated repression of SREBF1 (involved in de novo lipogenesis), expression of PLTP (involved in HDL formation), SCARB1 (involved in HDL hepatic uptake), APOE, APOC1, APOC4, PPARA (involved in beta-oxidation of fatty acids), VLDLR and SDC1 (involved in the hepatic uptake of LDL and IDL remnants), and inhibiting expression of MTTP (involved in VLDL assembly). Increases expression of APOC2 (promoting lipoprotein lipase activity implicated in triglyceride clearance). Transrepresses APOA1 involving a monomeric competition with NR2A1 for binding to a DR1 element. Also reduces triglyceride clearance by inhibiting expression of ANGPTL3 and APOC3 (both involved in inhibition of lipoprotein lipase). Involved in glucose homeostasis by modulating hepatic gluconeogenesis through activation of NR0B2/SHP-mediated repression of respective genes. Modulates glycogen synthesis (inducing phosphorylation of glycogen synthase kinase-3). Modulates glucose-stimulated insulin secretion and is involved in insulin resistance. Involved in intestinal innate immunity. Plays a role in protecting the distal small intestine against bacterial overgrowth and preservation of the epithelial barrier. Down-regulates inflammatory cytokine expression in several types of immune cells including macrophages and mononuclear cells. Mediates trans-repression of TLR4-induced cytokine expression; the function seems to require its sumoylation and prevents N-CoR nuclear receptor corepressor clearance from target genes such as IL1B and NOS2. Involved in the TLR9-mediated protective mechanism in intestinal inflammation. Plays an anti-inflammatory role in liver inflammation; proposed to inhibit pro-inflammatory (but not antiapoptotic) NF-kappa-B signaling. This is Bile acid receptor (NR1H4) from Bos taurus (Bovine).